A 148-amino-acid polypeptide reads, in one-letter code: D-aminoacyl-tRNA deacylase (148 aa).

Residues 137-138 carry the Gly-cisPro motif, important for rejection of L-amino acids motif; the sequence is GP.

It belongs to the DTD family. As to quaternary structure, homodimer.

Its subcellular location is the cytoplasm. It carries out the reaction glycyl-tRNA(Ala) + H2O = tRNA(Ala) + glycine + H(+). It catalyses the reaction a D-aminoacyl-tRNA + H2O = a tRNA + a D-alpha-amino acid + H(+). Functionally, an aminoacyl-tRNA editing enzyme that deacylates mischarged D-aminoacyl-tRNAs. Also deacylates mischarged glycyl-tRNA(Ala), protecting cells against glycine mischarging by AlaRS. Acts via tRNA-based rather than protein-based catalysis; rejects L-amino acids rather than detecting D-amino acids in the active site. By recycling D-aminoacyl-tRNA to D-amino acids and free tRNA molecules, this enzyme counteracts the toxicity associated with the formation of D-aminoacyl-tRNA entities in vivo and helps enforce protein L-homochirality. The protein is D-aminoacyl-tRNA deacylase of Latilactobacillus sakei subsp. sakei (strain 23K) (Lactobacillus sakei subsp. sakei).